A 425-amino-acid chain; its full sequence is Isocitrate dehydrogenase [NADP] (425 aa).

Thr-114 contributes to the NADP(+) binding site. The D-threo-isocitrate site is built by Ser-123, Asn-125, Arg-129, Arg-139, and Arg-162. Residue Asp-316 participates in Mg(2+) binding. NADP(+)-binding positions include 348–354, Asn-361, Tyr-400, and Arg-404; that span reads HGTAPKY.

This sequence belongs to the isocitrate and isopropylmalate dehydrogenases family. As to quaternary structure, homodimer. The cofactor is Mg(2+). It depends on Mn(2+) as a cofactor.

It catalyses the reaction D-threo-isocitrate + NADP(+) = 2-oxoglutarate + CO2 + NADPH. In terms of biological role, catalyzes the oxidative decarboxylation of isocitrate to 2-oxoglutarate and carbon dioxide with the concomitant reduction of NADP(+). This Helicobacter pylori (strain J99 / ATCC 700824) (Campylobacter pylori J99) protein is Isocitrate dehydrogenase [NADP] (icd).